We begin with the raw amino-acid sequence, 285 residues long: 3',5'-nucleoside bisphosphate phosphatase (285 aa).

The Mn(2+) site is built by H7, H9, D14, H39, E64, and H75. Residues D14 and H39 each contribute to the substrate site. Substrate-binding positions include 99–102 and 134–135; these read RLER and RT. Mn(2+) contacts are provided by H191, D248, and H250. H250 serves as a coordination point for substrate.

Belongs to the PHP family. In terms of assembly, monomer. The cofactor is Mn(2+).

The catalysed reaction is a ribonucleoside 3',5'-bisphosphate + H2O = a ribonucleoside 5'-phosphate + phosphate. In terms of biological role, hydrolyzes 3',5'-bisphosphonucleosides (pGp, pCp, pUp, and pIp) to nucleoside 5'-phosphate and orthophosphate. Has similar catalytic efficiencies with all the bases. Also shows activity with ribonucleoside 2'-deoxyribonucleoside 3',5'-bisphosphates. Does not show activity with nucleoside 2',5'-bisphosphates. This Chromobacterium violaceum (strain ATCC 12472 / DSM 30191 / JCM 1249 / CCUG 213 / NBRC 12614 / NCIMB 9131 / NCTC 9757 / MK) protein is 3',5'-nucleoside bisphosphate phosphatase.